Here is a 160-residue protein sequence, read N- to C-terminus: Heme transporter hrg-5 (160 aa).

The helical transmembrane segment at 21–41 (IALTILDILIGFSNILSYAIQ) threads the bilayer. Asn44 carries an N-linked (GlcNAc...) asparagine glycan. The next 3 helical transmembrane spans lie at 47-67 (ALTLTAMVTLVACHTLQMFLA), 89-109 (ITLGFLALGCFVVCFIIAGVT), and 123-142 (FTGLWATAITKYTWQNALLA). N-linked (GlcNAc...) asparagine glycosylation is present at Asn144.

It belongs to the HRG family.

Its subcellular location is the membrane. Heme transporter. The chain is Heme transporter hrg-5 (hrg-5) from Caenorhabditis elegans.